Consider the following 163-residue polypeptide: Nucleotide-binding protein BSU11020 (163 aa).

This sequence belongs to the YajQ family.

In terms of biological role, nucleotide-binding protein. The sequence is that of Nucleotide-binding protein BSU11020 (yitK) from Bacillus subtilis (strain 168).